Reading from the N-terminus, the 321-residue chain is Peptide transport system permease protein SapB (321 aa).

The Cytoplasmic portion of the chain corresponds to 1–8 (MIIFTLRR). Residues 9-29 (LLLLLVTLFFLTFIGFSLSYF) form a helical membrane-spanning segment. Over 30–80 (TPHAPLQGASLWNAWVFWFNGLLHWDFGVSSINGQLISEQLKEVFPATMEL) the chain is Periplasmic. An ABC transmembrane type-1 domain is found at 74–302 (FPATMELCIL…SLVIVVNVIS (229 aa)). The chain crosses the membrane as a helical span at residues 81-101 (CILAFGFALMVGIPVGMLAGV). Topologically, residues 102-113 (TRSKWPDRFISA) are cytoplasmic. The chain crosses the membrane as a helical span at residues 114-134 (LALLGFSIPVFWLALLLTLFF). Topologically, residues 135-174 (SLTLGWLPVSGRFDLLYEVKPVTGFAIIDAWISDSPWRDE) are periplasmic. The chain crosses the membrane as a helical span at residues 175-195 (MVMSAIRHMVLPVLTLSVAPT). Residues 196–248 (TEVIRLMRISTIEVYDQNYVKAAATRGLSRFTILRRHVLHNALPPVIPRLGLQ) lie on the Cytoplasmic side of the membrane. Residues 249-269 (FSTMLTLAMITEMVFSWPGLG) form a helical membrane-spanning segment. At 270–280 (RWLIHAIRQQD) the chain is on the periplasmic side. Residues 281–301 (YAAISAGVMVIGSLVIVVNVI) traverse the membrane as a helical segment. Topologically, residues 302–321 (SDILGAMANPLKHKEWYALR) are cytoplasmic.

It belongs to the binding-protein-dependent transport system permease family. OppBC subfamily.

The protein resides in the cell inner membrane. Involved in a peptide intake transport system that plays a role in the resistance to antimicrobial peptides. This chain is Peptide transport system permease protein SapB, found in Salmonella typhimurium (strain LT2 / SGSC1412 / ATCC 700720).